Here is a 722-residue protein sequence, read N- to C-terminus: uncharacterized protein (722 aa).

Residues serine 575, aspartate 658, and histidine 691 each act as charge relay system in the active site.

The protein belongs to the peptidase S9B family.

This is an uncharacterized protein from Rickettsia prowazekii (strain Madrid E).